A 273-amino-acid polypeptide reads, in one-letter code: Exosome complex component Rrp42 (273 aa).

It belongs to the RNase PH family. Rrp42 subfamily. Component of the archaeal exosome complex. Forms a hexameric ring-like arrangement composed of 3 Rrp41-Rrp42 heterodimers. The hexameric ring associates with a trimer of Rrp4 and/or Csl4 subunits.

It is found in the cytoplasm. Non-catalytic component of the exosome, which is a complex involved in RNA degradation. Contributes to the structuring of the Rrp41 active site. The chain is Exosome complex component Rrp42 from Thermococcus gammatolerans (strain DSM 15229 / JCM 11827 / EJ3).